A 324-amino-acid chain; its full sequence is Viral cathepsin (324 aa).

An N-terminal signal peptide occupies residues 1–16 (MNKIVLYLLVYGATLG). Positions 17–113 (AAYDLLKAPS…VVLDRPPDKG (97 aa)) are cleaved as a propeptide — activation peptide. 3 disulfides stabilise this stretch: cysteine 134/cysteine 175, cysteine 168/cysteine 208, and cysteine 263/cysteine 311. Cysteine 137 is a catalytic residue. Asparagine 159 carries N-linked (GlcNAc...) asparagine; by host glycosylation. Active-site residues include histidine 270 and asparagine 290.

It belongs to the peptidase C1 family. In terms of processing, synthesized as an inactive proenzyme and activated by proteolytic removal of the inhibitory propeptide.

The enzyme catalyses Endopeptidase of broad specificity, hydrolyzing substrates of both cathepsin L and cathepsin B.. Cysteine protease that plays an essential role in host liquefaction to facilitate horizontal transmission of the virus. May participate in the degradation of foreign protein expressed by the baculovirus system. The sequence is that of Viral cathepsin (VCATH) from Antheraea pernyi nuclear polyhedrosis virus (ApNPV).